A 333-amino-acid polypeptide reads, in one-letter code: Phospholipid phosphatase-related protein type 1 (333 aa).

Helical transmembrane passes span 12–32, 66–86, and 126–146; these read IIPC…LLAY, FIQP…IIFV, and FIGV…AGQV. N-linked (GlcNAc...) asparagine glycosylation occurs at N162. Helical transmembrane passes span 200-217, 223-243, and 256-276; these read ASLS…ITST, SRLA…LTGL, and VVAG…CVVN.

This sequence belongs to the PA-phosphatase related phosphoesterase family.

Its subcellular location is the cell membrane. It is found in the cell projection. It localises to the neuron projection. In terms of biological role, may play a role in neurite outgrowth and neurogenesis. The protein is Phospholipid phosphatase-related protein type 1 (plppr1) of Danio rerio (Zebrafish).